The following is a 105-amino-acid chain: Large ribosomal subunit protein uL24 (105 aa).

The protein belongs to the universal ribosomal protein uL24 family. As to quaternary structure, part of the 50S ribosomal subunit.

In terms of biological role, one of two assembly initiator proteins, it binds directly to the 5'-end of the 23S rRNA, where it nucleates assembly of the 50S subunit. Its function is as follows. One of the proteins that surrounds the polypeptide exit tunnel on the outside of the subunit. In Mycobacterium tuberculosis (strain CDC 1551 / Oshkosh), this protein is Large ribosomal subunit protein uL24.